Consider the following 138-residue polypeptide: Large ribosomal subunit protein eL27 (138 aa).

It belongs to the eukaryotic ribosomal protein eL27 family.

This chain is Large ribosomal subunit protein eL27 (RPL27), found in Solanum tuberosum (Potato).